The chain runs to 326 residues: Type II secretion system protein K (326 aa).

Residues 1 to 7 constitute a propeptide, leader sequence; it reads MNHRQRG. The chain crosses the membrane as a helical span at residues 8-28; the sequence is IALLMVLLILALMMVLASAMT. Residues 29–326 are Periplasmic-facing; the sequence is ERSARMYQQT…RYGIYWVADE (298 aa).

This sequence belongs to the GSP K family. As to quaternary structure, type II secretion is composed of four main components: the outer membrane complex, the inner membrane complex, the cytoplasmic secretion ATPase and the periplasm-spanning pseudopilus. Interacts with core component PulG. Cleaved by prepilin peptidase.

The protein resides in the cell inner membrane. Functionally, component of the type II secretion system required for the energy-dependent secretion of extracellular factors such as proteases and toxins from the periplasm. Plays a role in pseudopilus assembly and seems to control its length. Interacts with the pseudopilus tip complex that is critical for the recognition and binding of secretion substrates. In Klebsiella pneumoniae, this protein is Type II secretion system protein K (pulK).